A 157-amino-acid polypeptide reads, in one-letter code: MANKNEPKITVAAENRKARFNYAIEDTIEAGIALTGTEVKSVRGGKSTIAESYADSRDGEIWLINANIPEYLQANRFNHEPKRPRKLLLHRKQINKLMGAVEREGMTLIPLKLYFNERGRAKLLLAVAKGKKLHDKRESEKKRDWGREKGRLLRARG.

The tract at residues 133 to 157 is disordered; it reads LHDKRESEKKRDWGREKGRLLRARG. The segment covering 135–151 has biased composition (basic and acidic residues); sequence DKRESEKKRDWGREKGR.

The protein belongs to the SmpB family.

Its subcellular location is the cytoplasm. Required for rescue of stalled ribosomes mediated by trans-translation. Binds to transfer-messenger RNA (tmRNA), required for stable association of tmRNA with ribosomes. tmRNA and SmpB together mimic tRNA shape, replacing the anticodon stem-loop with SmpB. tmRNA is encoded by the ssrA gene; the 2 termini fold to resemble tRNA(Ala) and it encodes a 'tag peptide', a short internal open reading frame. During trans-translation Ala-aminoacylated tmRNA acts like a tRNA, entering the A-site of stalled ribosomes, displacing the stalled mRNA. The ribosome then switches to translate the ORF on the tmRNA; the nascent peptide is terminated with the 'tag peptide' encoded by the tmRNA and targeted for degradation. The ribosome is freed to recommence translation, which seems to be the essential function of trans-translation. The protein is SsrA-binding protein of Bradyrhizobium sp. (strain ORS 278).